The sequence spans 238 residues: Opacity protein opA60 (238 aa).

A signal peptide is located at residue alanine 1.

It belongs to the opacity porin family.

Its subcellular location is the cell outer membrane. In terms of biological role, implicated in a number of adherence functions. OPA proteins are implicated in pathogenesis and are subject to phase variation. The protein is Opacity protein opA60 (opaH) of Neisseria gonorrhoeae.